We begin with the raw amino-acid sequence, 176 residues long: Ribosome rescue factor SmrB (176 aa).

Positions 97-172 constitute a Smr domain; the sequence is LDMHGMTQQE…GDGALLVLLS (76 aa).

It belongs to the SmrB family. Associates with collided ribosomes, but not with correctly translating polysomes.

Functionally, acts as a ribosome collision sensor. Detects stalled/collided disomes (pairs of ribosomes where the leading ribosome is stalled and a second ribosome has collided with it) and endonucleolytically cleaves mRNA at the 5' boundary of the stalled ribosome. Stalled/collided disomes form a new interface (primarily via the 30S subunits) that binds SmrB. Cleaved mRNA becomes available for tmRNA ligation, leading to ribosomal subunit dissociation and rescue of stalled ribosomes. This chain is Ribosome rescue factor SmrB, found in Vibrio vulnificus (strain CMCP6).